A 297-amino-acid polypeptide reads, in one-letter code: Proline iminopeptidase (297 aa).

In terms of domain architecture, AB hydrolase-1 spans 26–131 (VLLLHGGPAM…GLLVSNMMAS (106 aa)). Ser-103 functions as the Nucleophile in the catalytic mechanism. Asp-243 is an active-site residue. His-270 functions as the Proton donor in the catalytic mechanism.

Belongs to the peptidase S33 family. In terms of assembly, monomer.

The enzyme catalyses Release of N-terminal proline from a peptide.. In terms of biological role, releases the N-terminal proline from various substrates. In Flavobacterium johnsoniae (strain ATCC 17061 / DSM 2064 / JCM 8514 / BCRC 14874 / CCUG 350202 / NBRC 14942 / NCIMB 11054 / UW101) (Cytophaga johnsonae), this protein is Proline iminopeptidase (fpaP).